We begin with the raw amino-acid sequence, 883 residues long: Phosphoenolpyruvate carboxylase (883 aa).

Residues histidine 138 and lysine 546 contribute to the active site.

This sequence belongs to the PEPCase type 1 family. Requires Mg(2+) as cofactor.

The catalysed reaction is oxaloacetate + phosphate = phosphoenolpyruvate + hydrogencarbonate. Its function is as follows. Forms oxaloacetate, a four-carbon dicarboxylic acid source for the tricarboxylic acid cycle. In Escherichia fergusonii (strain ATCC 35469 / DSM 13698 / CCUG 18766 / IAM 14443 / JCM 21226 / LMG 7866 / NBRC 102419 / NCTC 12128 / CDC 0568-73), this protein is Phosphoenolpyruvate carboxylase.